The sequence spans 501 residues: DEAD-box ATP-dependent RNA helicase 20 (501 aa).

Basic and acidic residues-rich tracts occupy residues 1–20 (MSRY…RRSD) and 38–53 (SKKD…KLDL). The disordered stretch occupies residues 1-53 (MSRYDSRTGDSTSYRDRRSDSGFGGTSSYGSSGSHTSSKKDNDGNESPRKLDL). The short motif at 99-127 (KSFRDVGFPDYVLEEVKKAGFTEPTPIQS) is the Q motif element. The Helicase ATP-binding domain maps to 130–305 (WPMAMKGRDL…KKFLYNPYKV (176 aa)). ATP is bound at residue 143 to 150 (AETGSGKT). Positions 253 to 256 (DEAD) match the DEAD box motif. Positions 333-478 (KLVKLLEDIM…KVSPELASMG (146 aa)) constitute a Helicase C-terminal domain. The segment at 473-501 (ELASMGRSTAPPPPGLGGFRDRGSRRGWS) is disordered. Residues 491–501 (FRDRGSRRGWS) show a composition bias toward basic and acidic residues.

Belongs to the DEAD box helicase family. DDX5/DBP2 subfamily.

It localises to the nucleus. It catalyses the reaction ATP + H2O = ADP + phosphate + H(+). Functionally, ATP-dependent RNA helicase involved nonsense-mediated mRNA decay and ribosome biogenesis through rRNA processing. The protein is DEAD-box ATP-dependent RNA helicase 20 (RH20) of Arabidopsis thaliana (Mouse-ear cress).